The chain runs to 228 residues: Protein TIFY 10a (228 aa).

The 36-residue stretch at 75 to 110 (REQEKRQLTIFYGGKVLVFDDFPAEKAKDLMQMASK) folds into the Tify domain. Positions 164–189 (PQARKASLHRFLEKRKDRLQAKAPYQ) match the Jas motif. Positions 166–173 (ARKASLHR) match the Nuclear localization signal motif. Residues 175-228 (LEKRKDRLQAKAPYQGSPSDASPVKKELQESQPWLGLGPQVAAPDLSLRQESSQ) form a disordered region.

It belongs to the TIFY/JAZ family. In terms of assembly, interacts with COI1A and COI1B in a coronatine-dependent manner. Coronatine is an analog of jasmonoyl isoleucine (JA-Ile). Ubiquitinated. Targeted for degradation by the SCF(COI1) E3 ubiquitin ligase-proteasome pathway during jasmonate signaling.

It is found in the nucleus. Functionally, repressor of jasmonate responses. The sequence is that of Protein TIFY 10a from Oryza sativa subsp. japonica (Rice).